Reading from the N-terminus, the 358-residue chain is E3 ubiquitin-protein ligase RNF146 (358 aa).

The RING-type zinc-finger motif lies at 36–74 (CAICLQTCVHPVSLPCKHVFCYLCVKGASWLGKRCALCR). Glycyl lysine isopeptide (Lys-Gly) (interchain with G-Cter in ubiquitin) cross-links involve residues Lys84 and Lys94. The region spanning 91–167 (EELKAASRGN…EHGRRRKIKR (77 aa)) is the WWE domain. Tyr107, Arg110, and Trp114 together coordinate a glycoprotein. Lys130 is covalently cross-linked (Glycyl lysine isopeptide (Lys-Gly) (interchain with G-Cter in ubiquitin)). A glycoprotein-binding residues include Tyr144, Gln153, Arg163, and Lys175. Lys175 participates in a covalent cross-link: Glycyl lysine isopeptide (Lys-Gly) (interchain with G-Cter in ubiquitin). The tract at residues 253 to 358 (GDNTAERSHR…PDGQCTVTEV (106 aa)) is disordered. A compositionally biased stretch (acidic residues) spans 283-297 (SIEETESDASSDSED). Ser289 and Ser293 each carry phosphoserine. A compositionally biased stretch (polar residues) spans 305 to 322 (HSLTQQRLLVSNANQTVP).

In terms of assembly, can form homooligomers. Interacts with PARsylated AXIN1, AXIN2, BLZF1, CASC3, H1-2, IPO7, LIG3, NCL, PARP1, XRCC1, XRCC5 and XRCC6. Interacts with DDB1, DHX15, IQGAP1, LRPPRC, PARP2, PRKDC, RUVBL2, TNKS1 and TNKS2. Binding often leads to interactor ubiquitination, in the presence of the appropriate E1 and E2 enzymes, and proteasomal degradation. Ubiquitinated; autoubiquitinated. Autoubiquitination is enhanced upon poly(ADP-ribose)-binding.

It localises to the cytoplasm. The protein localises to the cytosol. The protein resides in the nucleus. It carries out the reaction S-ubiquitinyl-[E2 ubiquitin-conjugating enzyme]-L-cysteine + [acceptor protein]-L-lysine = [E2 ubiquitin-conjugating enzyme]-L-cysteine + N(6)-ubiquitinyl-[acceptor protein]-L-lysine.. It functions in the pathway protein modification; protein ubiquitination. In terms of biological role, E3 ubiquitin-protein ligase that specifically binds poly-ADP-ribosylated (PARsylated) proteins and mediates their ubiquitination and subsequent degradation. May regulate many important biological processes, such as cell survival and DNA damage response. Acts as an activator of the Wnt signaling pathway by mediating the ubiquitination of PARsylated AXIN1 and AXIN2, 2 key components of the beta-catenin destruction complex. Acts in cooperation with tankyrase proteins (TNKS and TNKS2), which mediate PARsylation of target proteins AXIN1, AXIN2, BLZF1, CASC3, TNKS and TNKS2. Recognizes and binds tankyrase-dependent PARsylated proteins via its WWE domain and mediates their ubiquitination, leading to their degradation. Different ubiquitin linkage types have been observed: TNKS2 undergoes ubiquitination at 'Lys-48' and 'Lys-63', while AXIN1 is only ubiquitinated at 'Lys-48'. May regulate TNKS and TNKS2 subcellular location, preventing aggregation at a centrosomal location. Neuroprotective protein. Protects the brain against N-methyl-D-aspartate (NMDA) receptor-mediated glutamate excitotoxicity and ischemia, by interfering with PAR-induced cell death, called parthanatos. Prevents nuclear translocation of AIFM1 in a PAR-binding dependent manner. Does not affect PARP1 activation. Protects against cell death induced by DNA damaging agents, such as N-methyl-N-nitro-N-nitrosoguanidine (MNNG) and rescues cells from G1 arrest. Promotes cell survival after gamma-irradiation. Facilitates DNA repair. The chain is E3 ubiquitin-protein ligase RNF146 (RNF146) from Pongo abelii (Sumatran orangutan).